We begin with the raw amino-acid sequence, 151 residues long: MVAKRQVSVKSIKRKARKAQKAITGRAKEFSYRGHSLEELQNMELNELLPLLPARARRSYSRQMNHEQEKLYEKLLGDKENIKTHVRDLIVLPQFVGKTIELYNGNSYIKFEIKPEMIGHYLGEFALTRKEVKHSGPGVGATRSSKFLPLK.

This sequence belongs to the universal ribosomal protein uS19 family.

In terms of biological role, protein S19 forms a complex with S13 that binds strongly to the 16S ribosomal RNA. This Picrophilus torridus (strain ATCC 700027 / DSM 9790 / JCM 10055 / NBRC 100828 / KAW 2/3) protein is Small ribosomal subunit protein uS19.